The chain runs to 203 residues: dITP/XTP pyrophosphatase (203 aa).

Residue 8 to 13 (SNNAGK) coordinates substrate. Residues D40 and D69 each coordinate Mg(2+). Catalysis depends on D69, which acts as the Proton acceptor. Residues S70, 152 to 155 (FGYD), K175, and 180 to 181 (HR) each bind substrate.

Belongs to the HAM1 NTPase family. As to quaternary structure, homodimer. It depends on Mg(2+) as a cofactor.

It carries out the reaction XTP + H2O = XMP + diphosphate + H(+). The catalysed reaction is dITP + H2O = dIMP + diphosphate + H(+). The enzyme catalyses ITP + H2O = IMP + diphosphate + H(+). In terms of biological role, pyrophosphatase that catalyzes the hydrolysis of nucleoside triphosphates to their monophosphate derivatives, with a high preference for the non-canonical purine nucleotides XTP (xanthosine triphosphate), dITP (deoxyinosine triphosphate) and ITP. Seems to function as a house-cleaning enzyme that removes non-canonical purine nucleotides from the nucleotide pool, thus preventing their incorporation into DNA/RNA and avoiding chromosomal lesions. This is dITP/XTP pyrophosphatase from Nitrosomonas europaea (strain ATCC 19718 / CIP 103999 / KCTC 2705 / NBRC 14298).